The following is a 294-amino-acid chain: ATP synthase gamma chain (294 aa).

It belongs to the ATPase gamma chain family. In terms of assembly, F-type ATPases have 2 components, CF(1) - the catalytic core - and CF(0) - the membrane proton channel. CF(1) has five subunits: alpha(3), beta(3), gamma(1), delta(1), epsilon(1). CF(0) has three main subunits: a, b and c.

It is found in the cell inner membrane. Produces ATP from ADP in the presence of a proton gradient across the membrane. The gamma chain is believed to be important in regulating ATPase activity and the flow of protons through the CF(0) complex. The chain is ATP synthase gamma chain from Rhizorhabdus wittichii (strain DSM 6014 / CCUG 31198 / JCM 15750 / NBRC 105917 / EY 4224 / RW1) (Sphingomonas wittichii).